A 104-amino-acid polypeptide reads, in one-letter code: MAVSLLLRGGRIRALKAVLLEARVFPGELVSVVRLSTESEKSAKEKELHPKTQSVLKEPEPTDTTTYKNLQHHDYNTYTFLDLNLDLSKFRLPQPSSGRESPRH.

The transit peptide at 1-35 (MAVSLLLRGGRIRALKAVLLEARVFPGELVSVVRL) directs the protein to the mitochondrion. Over residues 38-50 (ESEKSAKEKELHP) the composition is skewed to basic and acidic residues. The segment at 38-68 (ESEKSAKEKELHPKTQSVLKEPEPTDTTTYK) is disordered. S101 bears the Phosphoserine mark.

This sequence belongs to the complex I NDUFV3 subunit family. In terms of assembly, complex I is composed of 45 different subunits. This is a component of the flavoprotein-sulfur (FP) fragment of the enzyme.

It is found in the mitochondrion inner membrane. In terms of biological role, accessory subunit of the mitochondrial membrane respiratory chain NADH dehydrogenase (Complex I), that is believed not to be involved in catalysis. Complex I functions in the transfer of electrons from NADH to the respiratory chain. The immediate electron acceptor for the enzyme is believed to be ubiquinone. May be the terminally assembled subunit of Complex I. The protein is NADH dehydrogenase [ubiquinone] flavoprotein 3, mitochondrial (Ndufv3) of Mus musculus (Mouse).